The primary structure comprises 437 residues: UDP-N-acetylmuramoylalanine--D-glutamate ligase (437 aa).

115–121 (GSNGKST) contacts ATP.

The protein belongs to the MurCDEF family.

Its subcellular location is the cytoplasm. It carries out the reaction UDP-N-acetyl-alpha-D-muramoyl-L-alanine + D-glutamate + ATP = UDP-N-acetyl-alpha-D-muramoyl-L-alanyl-D-glutamate + ADP + phosphate + H(+). Its pathway is cell wall biogenesis; peptidoglycan biosynthesis. Its function is as follows. Cell wall formation. Catalyzes the addition of glutamate to the nucleotide precursor UDP-N-acetylmuramoyl-L-alanine (UMA). The sequence is that of UDP-N-acetylmuramoylalanine--D-glutamate ligase from Vibrio parahaemolyticus serotype O3:K6 (strain RIMD 2210633).